The primary structure comprises 228 residues: MVRYLSQQEAIDIDQELFNVYKYSVDQLMELAGLSCSIAIYKCYSKLKKILVCCGPGNNGGDGLVAARHLKLFGFEPSVYYPKRTEKPLYQNLTHQCLAMKIDFLNDIPDAKEMSNNYELIVDALFGFSFKPPVRPEFEKVMNVLGKSKVPICSIDIPSGWDVENGCPENGILPDMLISLTAPKKCAKFFNGRFHYLGGRFVPPDLERKYDLKINSEYSGTECCVQLK.

Residues 10–214 (AIDIDQELFN…DLERKYDLKI (205 aa)) enclose the YjeF N-terminal domain. A (6S)-NADPHX-binding site is contributed by 58 to 62 (NNGGD). K(+)-binding residues include Asn59 and Asp123. Residues 127 to 133 (GFSFKPP) and Asp156 each bind (6S)-NADPHX. Residue Ser159 participates in K(+) binding.

This sequence belongs to the NnrE/AIBP family. K(+) serves as cofactor.

The catalysed reaction is (6R)-NADHX = (6S)-NADHX. The enzyme catalyses (6R)-NADPHX = (6S)-NADPHX. In terms of biological role, catalyzes the epimerization of the S- and R-forms of NAD(P)HX, a damaged form of NAD(P)H that is a result of enzymatic or heat-dependent hydration. This is a prerequisite for the S-specific NAD(P)H-hydrate dehydratase to allow the repair of both epimers of NAD(P)HX. The sequence is that of NAD(P)H-hydrate epimerase from Pediculus humanus subsp. corporis (Body louse).